A 348-amino-acid polypeptide reads, in one-letter code: tRNA pseudouridine synthase D (348 aa).

Residue Phe-26 participates in substrate binding. The Nucleophile role is filled by Asp-79. Asn-128 is a binding site for substrate. In terms of domain architecture, TRUD spans 154–302 (GVPNYFGSQR…VDPARRALLL (149 aa)). Position 328 (Phe-328) interacts with substrate.

This sequence belongs to the pseudouridine synthase TruD family.

It catalyses the reaction uridine(13) in tRNA = pseudouridine(13) in tRNA. Functionally, responsible for synthesis of pseudouridine from uracil-13 in transfer RNAs. In Serratia proteamaculans (strain 568), this protein is tRNA pseudouridine synthase D.